Here is a 673-residue protein sequence, read N- to C-terminus: Armadillo repeat-containing protein 8 (673 aa).

Alanine 2 bears the N-acetylalanine mark. ARM repeat units lie at residues 51-92 (NKQK…SLAM), 95-134 (ENNV…TIFT), 138-176 (TPEE…HCCK), 178-217 (PDHQ…VLAF), 224-265 (MTLV…YMCR), 269-309 (IRTD…YLIE), 313-352 (ELQR…HDLK), 374-413 (DIRK…SLSR), 416-455 (QQLR…NLLL), 458-497 (SPSK…NTAF), 501-540 (QKIK…NLLS), 543-585 (PHID…NIAD), 588-627 (TAKD…NLIW), and 634-673 (QERQ…QYLA). Serine 337 bears the Phosphoserine mark. Serine 512 is modified (phosphoserine).

Identified in the CTLH complex that contains GID4, RANBP9 and/or RANBP10, MKLN1, MAEA, RMND5A (or alternatively its paralog RMND5B), GID8, ARMC8, WDR26 and YPEL5. Within this complex, MAEA, RMND5A (or alternatively its paralog RMND5B), GID8, WDR26, and RANBP9 and/or RANBP10 form the catalytic core, while GID4, MKLN1, ARMC8 and YPEL5 have ancillary roles.

It is found in the nucleus. It localises to the cytoplasm. Component of the CTLH E3 ubiquitin-protein ligase complex that selectively accepts ubiquitin from UBE2H and mediates ubiquitination and subsequent proteasomal degradation of the transcription factor HBP1. In Pongo abelii (Sumatran orangutan), this protein is Armadillo repeat-containing protein 8 (ARMC8).